We begin with the raw amino-acid sequence, 233 residues long: Putative quercetin 2,3-dioxygenase PM1685 (233 aa).

Residues H59, H61, H103, and E105 each contribute to the a divalent metal cation site.

Belongs to the pirin family. A divalent metal cation is required as a cofactor.

It carries out the reaction quercetin + O2 = 2-(3,4-dihydroxybenzoyloxy)-4,6-dihydroxybenzoate + CO. The protein operates within flavonoid metabolism; quercetin degradation. In terms of biological role, putative quercetin 2,3-dioxygenase. The protein is Putative quercetin 2,3-dioxygenase PM1685 of Pasteurella multocida (strain Pm70).